The chain runs to 359 residues: Phosphatidylglycerol--prolipoprotein diacylglyceryl transferase (359 aa).

4 consecutive transmembrane segments (helical) span residues 24–44 (VALRAYALFIIVGIVVAIVWG), 58–78 (VLDIAIWAVPFGLIGGRLYHV), 98–118 (VWQGGLGIWGAVALGGVGAWI), and 124–144 (GIPLPALGDAVAPAILLAQAI). Arginine 146 serves as a coordination point for a 1,2-diacyl-sn-glycero-3-phospho-(1'-sn-glycerol). The next 3 helical transmembrane spans lie at 193–213 (FVVHPTFLYEALWNVLIVLLL), 222–243 (IGHGRLFALYVAGYCAGRFWIE), and 258–278 (VNSFTSALVFVAALVYFFAAT). Residues 284 to 359 (PAELRPADGG…IDSKKDDAND (76 aa)) are disordered. Residues 306–323 (IAQKEPEKNVEDAGKDEG) are compositionally biased toward basic and acidic residues. Low complexity predominate over residues 336–349 (ASTASTGGEAGTKT). The segment covering 350–359 (IDSKKDDAND) has biased composition (basic and acidic residues).

This sequence belongs to the Lgt family.

Its subcellular location is the cell membrane. It carries out the reaction L-cysteinyl-[prolipoprotein] + a 1,2-diacyl-sn-glycero-3-phospho-(1'-sn-glycerol) = an S-1,2-diacyl-sn-glyceryl-L-cysteinyl-[prolipoprotein] + sn-glycerol 1-phosphate + H(+). It participates in protein modification; lipoprotein biosynthesis (diacylglyceryl transfer). Functionally, catalyzes the transfer of the diacylglyceryl group from phosphatidylglycerol to the sulfhydryl group of the N-terminal cysteine of a prolipoprotein, the first step in the formation of mature lipoproteins. The chain is Phosphatidylglycerol--prolipoprotein diacylglyceryl transferase from Rhodococcus jostii (strain RHA1).